A 91-amino-acid chain; its full sequence is Small ribosomal subunit protein bS16 (91 aa).

Belongs to the bacterial ribosomal protein bS16 family.

The protein is Small ribosomal subunit protein bS16 of Staphylococcus aureus (strain Mu3 / ATCC 700698).